We begin with the raw amino-acid sequence, 117 residues long: Structural toxin peptide sea anemone type 9a (117 aa).

A signal peptide spans 1 to 23 (MKTIIAIFSLAAMIVLVRPTPLE). 3 repeat units span residues 28-56 (TRSI…GCQE), 57-88 (KRNI…NEAV), and 89-117 (KRAI…HGCS). A 3 X approximate tandem repeats region spans residues 29-117 (RSIINVPCKK…GKCRKIHGCS (89 aa)).

In terms of processing, contains 6 disulfide bonds. Expressed outside of acontia.

It is found in the secreted. It localises to the nematocyst. Putative neurotoxin. This chain is Structural toxin peptide sea anemone type 9a, found in Calliactis polypus (Hermit crab anemone).